Here is a 228-residue protein sequence, read N- to C-terminus: 7-cyano-7-deazaguanine synthase (228 aa).

8 to 18 contributes to the ATP binding site; it reads LSGGLDSTTCL. 4 residues coordinate Zn(2+): Cys188, Cys198, Cys201, and Cys204.

Belongs to the QueC family. Requires Zn(2+) as cofactor.

It carries out the reaction 7-carboxy-7-deazaguanine + NH4(+) + ATP = 7-cyano-7-deazaguanine + ADP + phosphate + H2O + H(+). The protein operates within purine metabolism; 7-cyano-7-deazaguanine biosynthesis. Its function is as follows. Catalyzes the ATP-dependent conversion of 7-carboxy-7-deazaguanine (CDG) to 7-cyano-7-deazaguanine (preQ(0)). This Legionella pneumophila subsp. pneumophila (strain Philadelphia 1 / ATCC 33152 / DSM 7513) protein is 7-cyano-7-deazaguanine synthase.